Here is a 215-residue protein sequence, read N- to C-terminus: Histidine biosynthesis bifunctional protein HisIE (215 aa).

The segment at 1–114 (MLKKHDLLNL…FISNKYNINF (114 aa)) is phosphoribosyl-AMP cyclohydrolase. A phosphoribosyl-ATP pyrophosphohydrolase region spans residues 115–215 (LFKLEEIIEE…LNTNSEKLLK (101 aa)).

It in the N-terminal section; belongs to the PRA-CH family. The protein in the C-terminal section; belongs to the PRA-PH family.

Its subcellular location is the cytoplasm. The enzyme catalyses 1-(5-phospho-beta-D-ribosyl)-ATP + H2O = 1-(5-phospho-beta-D-ribosyl)-5'-AMP + diphosphate + H(+). It carries out the reaction 1-(5-phospho-beta-D-ribosyl)-5'-AMP + H2O = 1-(5-phospho-beta-D-ribosyl)-5-[(5-phospho-beta-D-ribosylamino)methylideneamino]imidazole-4-carboxamide. It functions in the pathway amino-acid biosynthesis; L-histidine biosynthesis; L-histidine from 5-phospho-alpha-D-ribose 1-diphosphate: step 2/9. Its pathway is amino-acid biosynthesis; L-histidine biosynthesis; L-histidine from 5-phospho-alpha-D-ribose 1-diphosphate: step 3/9. The chain is Histidine biosynthesis bifunctional protein HisIE (hisI) from Buchnera aphidicola subsp. Acyrthosiphon pisum (strain APS) (Acyrthosiphon pisum symbiotic bacterium).